The following is a 205-amino-acid chain: Probable GTP-binding protein EngB (205 aa).

The region spanning 25–199 is the EngB-type G domain; the sequence is NGIEIAFIGY…KLSLNSSYKK (175 aa). GTP is bound by residues 33–40, 60–64, 78–81, 145–148, and 178–180; these read GYSNTGKS, GRTQL, DLPG, TKCD, and FSS. Residues Ser40 and Thr62 each coordinate Mg(2+).

It belongs to the TRAFAC class TrmE-Era-EngA-EngB-Septin-like GTPase superfamily. EngB GTPase family. Requires Mg(2+) as cofactor.

Functionally, necessary for normal cell division and for the maintenance of normal septation. The chain is Probable GTP-binding protein EngB from Buchnera aphidicola subsp. Acyrthosiphon pisum (strain 5A).